The following is an 855-amino-acid chain: DNA mismatch repair protein MutS (855 aa).

617-624 contributes to the ATP binding site; sequence GPNMGGKS.

This sequence belongs to the DNA mismatch repair MutS family.

In terms of biological role, this protein is involved in the repair of mismatches in DNA. It is possible that it carries out the mismatch recognition step. This protein has a weak ATPase activity. This chain is DNA mismatch repair protein MutS, found in Baumannia cicadellinicola subsp. Homalodisca coagulata.